A 636-amino-acid chain; its full sequence is Rust resistance kinase Lr10 (636 aa).

The first 24 residues, 1 to 24 (MSKLLVIALLLLPLINHGIYLATA), serve as a signal peptide directing secretion. At 25–276 (WDDQDFFKYC…MPDPHGSHIK (252 aa)) the chain is on the extracellular side. Residues asparagine 56, asparagine 177, and asparagine 222 are each glycosylated (N-linked (GlcNAc...) asparagine). The chain crosses the membrane as a helical span at residues 277–297 (VIAATSSVAAFVALLLTVATV). Topologically, residues 298-636 (LYLSLKTRYN…FVSSENELMS (339 aa)) are cytoplasmic. Positions 339–628 (RRFKEKVGQG…SLQMPPKPFV (290 aa)) constitute a Protein kinase domain. Residues 345–353 (VGQGGFGSV) and lysine 367 contribute to the ATP site. Aspartate 466 (proton acceptor) is an active-site residue.

This sequence belongs to the protein kinase superfamily. Ser/Thr protein kinase family. Specifically expressed in the aerial parts of the plant.

The protein resides in the cell membrane. It catalyses the reaction L-seryl-[protein] + ATP = O-phospho-L-seryl-[protein] + ADP + H(+). It carries out the reaction L-threonyl-[protein] + ATP = O-phospho-L-threonyl-[protein] + ADP + H(+). This is Rust resistance kinase Lr10 from Triticum aestivum (Wheat).